Consider the following 483-residue polypeptide: ATP synthase subunit beta (483 aa).

162–169 (GGAGVGKT) is an ATP binding site.

This sequence belongs to the ATPase alpha/beta chains family. In terms of assembly, F-type ATPases have 2 components, CF(1) - the catalytic core - and CF(0) - the membrane proton channel. CF(1) has five subunits: alpha(3), beta(3), gamma(1), delta(1), epsilon(1). CF(0) has four main subunits: a(1), b(1), b'(1) and c(9-12).

It localises to the cellular thylakoid membrane. It catalyses the reaction ATP + H2O + 4 H(+)(in) = ADP + phosphate + 5 H(+)(out). Functionally, produces ATP from ADP in the presence of a proton gradient across the membrane. The catalytic sites are hosted primarily by the beta subunits. This chain is ATP synthase subunit beta, found in Synechocystis sp. (strain ATCC 27184 / PCC 6803 / Kazusa).